Reading from the N-terminus, the 191-residue chain is Protein GrpE (191 aa).

The segment at 1–49 (MSEEKQTAEQVEAAEQEEVTEQAEQAASQEQHEETAGQEEALQHQIDEL) is disordered. Residues 12-21 (EAAEQEEVTE) are compositionally biased toward acidic residues. The span at 30–49 (EQHEETAGQEEALQHQIDEL) shows a compositional bias: basic and acidic residues.

The protein belongs to the GrpE family. Homodimer.

The protein resides in the cytoplasm. Functionally, participates actively in the response to hyperosmotic and heat shock by preventing the aggregation of stress-denatured proteins, in association with DnaK and GrpE. It is the nucleotide exchange factor for DnaK and may function as a thermosensor. Unfolded proteins bind initially to DnaJ; upon interaction with the DnaJ-bound protein, DnaK hydrolyzes its bound ATP, resulting in the formation of a stable complex. GrpE releases ADP from DnaK; ATP binding to DnaK triggers the release of the substrate protein, thus completing the reaction cycle. Several rounds of ATP-dependent interactions between DnaJ, DnaK and GrpE are required for fully efficient folding. This is Protein GrpE from Bacillus velezensis (strain DSM 23117 / BGSC 10A6 / LMG 26770 / FZB42) (Bacillus amyloliquefaciens subsp. plantarum).